The primary structure comprises 337 residues: DNA-directed RNA polymerase subunit alpha (337 aa).

The segment at 1 to 233 (MIQKNWQELI…DQLAIFVNFE (233 aa)) is alpha N-terminal domain (alpha-NTD). The alpha C-terminal domain (alpha-CTD) stretch occupies residues 249–337 (FNPALLKKVD…DLAKRYEDQY (89 aa)).

The protein belongs to the RNA polymerase alpha chain family. As to quaternary structure, homodimer. The RNAP catalytic core consists of 2 alpha, 1 beta, 1 beta' and 1 omega subunit. When a sigma factor is associated with the core the holoenzyme is formed, which can initiate transcription.

The enzyme catalyses RNA(n) + a ribonucleoside 5'-triphosphate = RNA(n+1) + diphosphate. DNA-dependent RNA polymerase catalyzes the transcription of DNA into RNA using the four ribonucleoside triphosphates as substrates. This Brucella anthropi (strain ATCC 49188 / DSM 6882 / CCUG 24695 / JCM 21032 / LMG 3331 / NBRC 15819 / NCTC 12168 / Alc 37) (Ochrobactrum anthropi) protein is DNA-directed RNA polymerase subunit alpha.